A 372-amino-acid chain; its full sequence is Glutamate 5-kinase (372 aa).

Residue K14 coordinates ATP. Substrate contacts are provided by S54, D141, and N153. Position 173–174 (173–174) interacts with ATP; it reads TD. In terms of domain architecture, PUA spans 280 to 358; that stretch reads RGHVVIDAGA…GEIESVLGYM (79 aa).

The protein belongs to the glutamate 5-kinase family.

Its subcellular location is the cytoplasm. It carries out the reaction L-glutamate + ATP = L-glutamyl 5-phosphate + ADP. The protein operates within amino-acid biosynthesis; L-proline biosynthesis; L-glutamate 5-semialdehyde from L-glutamate: step 1/2. In terms of biological role, catalyzes the transfer of a phosphate group to glutamate to form L-glutamate 5-phosphate. This chain is Glutamate 5-kinase, found in Burkholderia lata (strain ATCC 17760 / DSM 23089 / LMG 22485 / NCIMB 9086 / R18194 / 383).